The chain runs to 330 residues: Putative [LysW]-L-2-aminoadipate/[LysW]-L-glutamate phosphate reductase (330 aa).

NADP(+) is bound by residues 10–13 (SGYI) and 34–36 (SRR). The active site involves Cys142. Asn297 is a binding site for NADP(+).

It belongs to the NAGSA dehydrogenase family. Type 1 subfamily. LysY sub-subfamily.

Its subcellular location is the cytoplasm. The enzyme catalyses [amino-group carrier protein]-C-terminal-N-(1-carboxy-5-oxopentan-1-yl)-L-glutamine + phosphate + NADP(+) = [amino-group carrier protein]-C-terminal-N-(1-carboxy-5-phosphooxy-5-oxopentan-1-yl)-L-glutamine + NADPH + H(+). The catalysed reaction is [amino-group carrier protein]-C-terminal-gamma-(L-glutamyl-5-semialdehyde)-L-glutamate + phosphate + NADP(+) = [amino-group carrier protein]-C-terminal-gamma-(5-phospho-L-glutamyl)-L-glutamate + NADPH + H(+). Its pathway is amino-acid biosynthesis; L-lysine biosynthesis via AAA pathway; L-lysine from L-alpha-aminoadipate (Thermus route): step 3/5. The protein operates within amino-acid biosynthesis; L-arginine biosynthesis. In terms of biological role, involved in both the arginine and lysine biosynthetic pathways. This is Putative [LysW]-L-2-aminoadipate/[LysW]-L-glutamate phosphate reductase from Thermococcus kodakarensis (strain ATCC BAA-918 / JCM 12380 / KOD1) (Pyrococcus kodakaraensis (strain KOD1)).